Consider the following 177-residue polypeptide: Bifunctional protein PyrR (177 aa).

Residues 42 to 43 (SR), 104 to 112 (DDVLYTGRT), and arginine 137 each bind substrate. Positions 100-112 (VVIVDDVLYTGRT) match the PRPP-binding motif.

This sequence belongs to the purine/pyrimidine phosphoribosyltransferase family. PyrR subfamily.

The catalysed reaction is UMP + diphosphate = 5-phospho-alpha-D-ribose 1-diphosphate + uracil. Functionally, regulates the transcription of the pyrimidine nucleotide (pyr) operon in response to exogenous pyrimidines. In terms of biological role, also displays a weak uracil phosphoribosyltransferase activity which is not physiologically significant. The protein is Bifunctional protein PyrR of Fusobacterium nucleatum subsp. nucleatum (strain ATCC 25586 / DSM 15643 / BCRC 10681 / CIP 101130 / JCM 8532 / KCTC 2640 / LMG 13131 / VPI 4355).